We begin with the raw amino-acid sequence, 165 residues long: SsrA-binding protein (165 aa).

The protein belongs to the SmpB family.

The protein localises to the cytoplasm. In terms of biological role, required for rescue of stalled ribosomes mediated by trans-translation. Binds to transfer-messenger RNA (tmRNA), required for stable association of tmRNA with ribosomes. tmRNA and SmpB together mimic tRNA shape, replacing the anticodon stem-loop with SmpB. tmRNA is encoded by the ssrA gene; the 2 termini fold to resemble tRNA(Ala) and it encodes a 'tag peptide', a short internal open reading frame. During trans-translation Ala-aminoacylated tmRNA acts like a tRNA, entering the A-site of stalled ribosomes, displacing the stalled mRNA. The ribosome then switches to translate the ORF on the tmRNA; the nascent peptide is terminated with the 'tag peptide' encoded by the tmRNA and targeted for degradation. The ribosome is freed to recommence translation, which seems to be the essential function of trans-translation. The chain is SsrA-binding protein from Ruthia magnifica subsp. Calyptogena magnifica.